The primary structure comprises 313 residues: Porphobilinogen deaminase (313 aa).

Cys241 carries the post-translational modification S-(dipyrrolylmethanemethyl)cysteine.

It belongs to the HMBS family. As to quaternary structure, monomer. Dipyrromethane serves as cofactor.

It carries out the reaction 4 porphobilinogen + H2O = hydroxymethylbilane + 4 NH4(+). It functions in the pathway porphyrin-containing compound metabolism; protoporphyrin-IX biosynthesis; coproporphyrinogen-III from 5-aminolevulinate: step 2/4. Its pathway is porphyrin-containing compound metabolism; chlorophyll biosynthesis. Tetrapolymerization of the monopyrrole PBG into the hydroxymethylbilane pre-uroporphyrinogen in several discrete steps. The protein is Porphobilinogen deaminase of Chlorobium luteolum (strain DSM 273 / BCRC 81028 / 2530) (Pelodictyon luteolum).